The following is a 24-amino-acid chain: MKKTTIIMMGVAIIVVLGTELGWW.

The Cytoplasmic portion of the chain corresponds to 1–3 (MKK). Residues 4–24 (TTIIMMGVAIIVVLGTELGWW) form a helical membrane-spanning segment.

It is found in the cell inner membrane. This is an uncharacterized protein from Escherichia coli (strain K12).